The following is a 298-amino-acid chain: tRNA uridine(34) hydroxylase (298 aa).

The Rhodanese domain occupies 123–217 (QNPDVTLVDT…YLEEIPVAES (95 aa)). C177 (cysteine persulfide intermediate) is an active-site residue.

This sequence belongs to the TrhO family.

The enzyme catalyses uridine(34) in tRNA + AH2 + O2 = 5-hydroxyuridine(34) in tRNA + A + H2O. Catalyzes oxygen-dependent 5-hydroxyuridine (ho5U) modification at position 34 in tRNAs. This Picosynechococcus sp. (strain ATCC 27264 / PCC 7002 / PR-6) (Agmenellum quadruplicatum) protein is tRNA uridine(34) hydroxylase.